The sequence spans 357 residues: Histidinol-phosphate aminotransferase 2 (357 aa).

Position 216 is an N6-(pyridoxal phosphate)lysine (lysine 216).

This sequence belongs to the class-II pyridoxal-phosphate-dependent aminotransferase family. Histidinol-phosphate aminotransferase subfamily. In terms of assembly, homodimer. It depends on pyridoxal 5'-phosphate as a cofactor.

It catalyses the reaction L-histidinol phosphate + 2-oxoglutarate = 3-(imidazol-4-yl)-2-oxopropyl phosphate + L-glutamate. It participates in amino-acid biosynthesis; L-histidine biosynthesis; L-histidine from 5-phospho-alpha-D-ribose 1-diphosphate: step 7/9. This chain is Histidinol-phosphate aminotransferase 2, found in Idiomarina loihiensis (strain ATCC BAA-735 / DSM 15497 / L2-TR).